Reading from the N-terminus, the 1396-residue chain is G2/mitotic-specific cyclin-B3 (1396 aa).

Disordered regions lie at residues 1–64, 259–398, and 477–500; these read MPPP…TNAS, KEKP…PQME, and TTEK…PGEL. Positions 10–34 are enriched in basic and acidic residues; the sequence is SKLETEKAQSNKITPREEQQSEKIG. The short motif at 54–62 is the D-box element; the sequence is RSVFEDVTN. Positions 264–273 are enriched in basic residues; sequence VKKPHFRKKK. A compositionally biased stretch (polar residues) spans 306-315; it reads LQENTNNKDA. A Phosphoserine modification is found at Ser703. Residues 775-796 form a disordered region; it reads VDEPLSHQSPHIQNHSDTTKEA. Residues 780-790 show a composition bias toward polar residues; the sequence is SHQSPHIQNHS.

This sequence belongs to the cyclin family. Cyclin AB subfamily. In terms of assembly, interacts with CDK2 kinase. Ubiquitinated. Ubiquitination leads to its degradation during anaphase entry, after degradation of CCNB1. In terms of tissue distribution, expressed in testis. Also expressed in the fetal ovary, but not in the adult.

It localises to the nucleus. Its function is as follows. Cyclins are positive regulatory subunits of the cyclin-dependent kinases (CDKs), and thereby play an essential role in the control of the cell cycle, notably via their destruction during cell division. Its tissue specificity suggest that it may be required during early meiotic prophase I. The sequence is that of G2/mitotic-specific cyclin-B3 (Ccnb3) from Mus musculus (Mouse).